Here is a 478-residue protein sequence, read N- to C-terminus: Protein nucleotidyltransferase YdiU (478 aa).

Positions 84, 86, 87, 107, 119, 120, 170, and 177 each coordinate ATP. Aspartate 246 serves as the catalytic Proton acceptor. Asparagine 247 and aspartate 256 together coordinate Mg(2+). Aspartate 256 is a binding site for ATP.

It belongs to the SELO family. It depends on Mg(2+) as a cofactor. Mn(2+) serves as cofactor.

The enzyme catalyses L-seryl-[protein] + ATP = 3-O-(5'-adenylyl)-L-seryl-[protein] + diphosphate. It catalyses the reaction L-threonyl-[protein] + ATP = 3-O-(5'-adenylyl)-L-threonyl-[protein] + diphosphate. It carries out the reaction L-tyrosyl-[protein] + ATP = O-(5'-adenylyl)-L-tyrosyl-[protein] + diphosphate. The catalysed reaction is L-histidyl-[protein] + UTP = N(tele)-(5'-uridylyl)-L-histidyl-[protein] + diphosphate. The enzyme catalyses L-seryl-[protein] + UTP = O-(5'-uridylyl)-L-seryl-[protein] + diphosphate. It catalyses the reaction L-tyrosyl-[protein] + UTP = O-(5'-uridylyl)-L-tyrosyl-[protein] + diphosphate. In terms of biological role, nucleotidyltransferase involved in the post-translational modification of proteins. It can catalyze the addition of adenosine monophosphate (AMP) or uridine monophosphate (UMP) to a protein, resulting in modifications known as AMPylation and UMPylation. The protein is Protein nucleotidyltransferase YdiU of Escherichia coli O127:H6 (strain E2348/69 / EPEC).